A 428-amino-acid chain; its full sequence is Probable mitochondrial adenine nucleotide transporter BTL3 (428 aa).

Solcar repeat units lie at residues Leu129–Gln212, Thr222–Ala307, and Leu336–Val421. The next 6 helical transmembrane spans lie at Thr132–Leu152, Gly187–Asp207, Phe228–Ile248, Leu283–Ile303, Leu342–Val362, and Val390–Ile410.

This sequence belongs to the mitochondrial carrier (TC 2.A.29) family.

Its subcellular location is the mitochondrion inner membrane. Its function is as follows. Probable mitochondrial adenylate carrier that catalyzes the transport of ATP, ADP and AMP. The protein is Probable mitochondrial adenine nucleotide transporter BTL3 of Arabidopsis thaliana (Mouse-ear cress).